Reading from the N-terminus, the 1028-residue chain is U2 snRNP-associated SURP motif-containing protein (1028 aa).

Disordered regions lie at residues 1–111 (MADK…EDEK) and 141–272 (VNAA…DPST). At Ala-2 the chain carries N-acetylalanine. Over residues 7-16 (GGSQKASSKT) the composition is skewed to polar residues. The span at 45-54 (TRPKSPRKHN) shows a compositional bias: basic residues. The segment covering 55-64 (YRNESARESL) has biased composition (basic and acidic residues). Ser-67 carries the phosphoserine modification. Residue Lys-80 forms a Glycyl lysine isopeptide (Lys-Gly) (interchain with G-Cter in SUMO2) linkage. Residues 92-121 (AKRTLSKKEQEELKKKEDEKAAAEIYEEFL) adopt a coiled-coil conformation. Composition is skewed to basic and acidic residues over residues 97–111 (SKKEQEELKKKEDEK) and 144–155 (AKEEHETDEKRG). Residues Lys-145 and Lys-168 each participate in a glycyl lysine isopeptide (Lys-Gly) (interchain with G-Cter in SUMO2) cross-link. Polar residues predominate over residues 169 to 178 (NPPNQSSNER). Over residues 186–222 (ETKKPPLKKGEKEKKKSNLELFKEELKQIQEERDERH) the composition is skewed to basic and acidic residues. Residues 192-232 (LKKGEKEKKKSNLELFKEELKQIQEERDERHKTKGRLSRFE) are a coiled coil. Position 202 is a phosphoserine (Ser-202). A Glycyl lysine isopeptide (Lys-Gly) (interchain with G-Cter in SUMO2) cross-link involves residue Lys-208. At Ser-236 the chain carries Phosphoserine. Residues 239–249 (DGQRRSMDAPS) are compositionally biased toward basic and acidic residues. Residues 273 to 354 (TNLYLGNINP…FEMKLGWGKA (82 aa)) enclose the RRM domain. Residues 429-472 (LIHRMIEFVVREGPMFEAMIMNREINNPMFRFLFENQTPAHVYY) form an SURP motif repeat. Ser-484 carries the phosphoserine modification. A CID domain is found at 533–678 (LKEEQRDKLE…KLQNIFLGLV (146 aa)). Thr-718 is modified (phosphothreonine). Residues Lys-747 and Lys-748 each participate in a glycyl lysine isopeptide (Lys-Gly) (interchain with G-Cter in SUMO2) cross-link. Lys-759 is modified (N6-acetyllysine; alternate). Residue Lys-759 forms a Glycyl lysine isopeptide (Lys-Gly) (interchain with G-Cter in SUMO2); alternate linkage. Disordered stretches follow at residues 777-840 (KWEL…EEKR) and 854-1028 (QDEL…KNKH). A coiled-coil region spans residues 779-809 (ELFDQHEESEEEENQNQEEESEDEEDTQSSK). Residues 785 to 805 (EESEEEENQNQEEESEDEEDT) are compositionally biased toward acidic residues. Ser-787, Ser-799, and Ser-810 each carry phosphoserine. Basic and acidic residues-rich tracts occupy residues 809-840 (KSEEHHLYSNPIKEEMTESKFSKYSEMSEEKR) and 873-921 (QVEH…TPTR). Glycyl lysine isopeptide (Lys-Gly) (interchain with G-Cter in SUMO2) cross-links involve residues Lys-821, Lys-828, and Lys-831. Positions 836–914 (SEEKRAKLRE…ESRSKDEKEK (79 aa)) form a coiled coil. A Phosphothreonine modification is found at Thr-930. Residues Ser-945 and Ser-947 each carry the phosphoserine modification. Residues 949-979 (KSERSERSERSHKESSRSRSSHKDSPRDVSK) show a composition bias toward basic and acidic residues. Positions 990–1028 (TPKRSRRSRSRSPKKSGKKSRSQSRSPHRSHKKSKKNKH) are enriched in basic residues.

Belongs to the splicing factor SR family. Interacts with ERBB4.

It localises to the nucleus. This is U2 snRNP-associated SURP motif-containing protein (U2SURP) from Pongo abelii (Sumatran orangutan).